The following is a 508-amino-acid chain: Bifunctional purine biosynthesis protein PurH (508 aa).

The 145-residue stretch at 1–145 (MAKKALISVS…KNYKYVTILV (145 aa)) folds into the MGS-like domain.

This sequence belongs to the PurH family.

It catalyses the reaction (6R)-10-formyltetrahydrofolate + 5-amino-1-(5-phospho-beta-D-ribosyl)imidazole-4-carboxamide = 5-formamido-1-(5-phospho-D-ribosyl)imidazole-4-carboxamide + (6S)-5,6,7,8-tetrahydrofolate. It carries out the reaction IMP + H2O = 5-formamido-1-(5-phospho-D-ribosyl)imidazole-4-carboxamide. It participates in purine metabolism; IMP biosynthesis via de novo pathway; 5-formamido-1-(5-phospho-D-ribosyl)imidazole-4-carboxamide from 5-amino-1-(5-phospho-D-ribosyl)imidazole-4-carboxamide (10-formyl THF route): step 1/1. It functions in the pathway purine metabolism; IMP biosynthesis via de novo pathway; IMP from 5-formamido-1-(5-phospho-D-ribosyl)imidazole-4-carboxamide: step 1/1. The chain is Bifunctional purine biosynthesis protein PurH from Thermoanaerobacter sp. (strain X514).